The sequence spans 474 residues: Polyamine oxidase 7 (474 aa).

Residues 1–27 (MTKPTTMAIFLSIVLLSMAQLPSLVAG) form the signal peptide. FAD is bound by residues Glu61 and Arg69. Asn103 and Asn150 each carry an N-linked (GlcNAc...) asparagine glycan. Val261 is an FAD binding site. Residue Asn278 is glycosylated (N-linked (GlcNAc...) asparagine). Glu454 is an FAD binding site.

The protein belongs to the flavin monoamine oxidase family. Requires FAD as cofactor.

The protein localises to the secreted. It localises to the extracellular space. It is found in the apoplast. It carries out the reaction spermine + O2 + H2O = 3-aminopropanal + spermidine + H2O2. The enzyme catalyses N(1)-acetylspermine + O2 + H2O = 3-acetamidopropanal + spermidine + H2O2. It catalyses the reaction norspermine + O2 + H2O = norspermidine + 3-aminopropanal + H2O2. The catalysed reaction is spermidine + O2 + H2O = 3-aminopropanal + putrescine + H2O2. It carries out the reaction N(1)-acetylspermidine + O2 + H2O = 3-acetamidopropanal + putrescine + H2O2. The enzyme catalyses thermospermine + O2 + H2O = 3-aminopropanal + spermidine + H2O2. It functions in the pathway amine and polyamine degradation; spermidine degradation. Its pathway is amine and polyamine degradation; spermine degradation. Functionally, flavoenzyme involved in polyamine back-conversion. Catalyzes the oxidation of the secondary amino group of polyamines, such as spermine, spermidine and their acetyl derivatives. Substrate preference is spermine &gt; spermidine &gt; N(1)-acetylspermine &gt; N(1)-acetylspermidine &gt; norspermine &gt; thermospermine. No activity detected when putrescine is used as substrate. May play a role in producing hydrogen peroxide for secondary wall thickening through lignin formation during anther development. This Oryza sativa subsp. japonica (Rice) protein is Polyamine oxidase 7.